The following is a 787-amino-acid chain: ABC transporter G family member 5 (787 aa).

Basic and acidic residues predominate over residues 1–17 (MSRFVDKLPLFDRRPSP). Disordered regions lie at residues 1-25 (MSRF…EGLP) and 71-116 (NDAR…EGQP). The segment covering 74–85 (RSGSSTPISSPR) has biased composition (polar residues). The 262-residue stretch at 121 to 382 (LKFTDLTYSV…FLDFGKPIPD (262 aa)) folds into the ABC transporter domain. ATP is bound at residue 175-182 (GASGSGKS). Residues 484–691 (GVLTRRAFIN…PYEAVMQNEF (208 aa)) form the ABC transmembrane type-2 domain. Transmembrane regions (helical) follow at residues 500 to 520 (VFII…TIFW), 535 to 555 (FFAI…PVFL), 576 to 596 (VLSH…AFAL), 599 to 619 (FFSV…AIVL), 620 to 640 (ASFW…THVM), 641 to 661 (LGFP…GFFI), 728 to 745 (SLGV…GPDF), and 760 to 780 (LWIT…SLLL).

This sequence belongs to the ABC transporter superfamily. ABCG family. Eye pigment precursor importer (TC 3.A.1.204) subfamily. As to expression, expressed in the crown root primordia, endodermis, pericycle and stele in the root, in leaf primordia of main and axillary shoots, and in the vascular cells and leaf epidermis of older leaves.

The protein localises to the cell membrane. Essential transporter for growth and development under abiotic stress. Mediates shoot branching by promoting the outgrowth of lateral shoots. Required for salt tolerance via Na/K homeostasis, at least partly by regulating SKC1/OsHKT1;5. Necessary for hypodermal suberization of roots, which contributes to formation of the apoplastic barrier. This is ABC transporter G family member 5 from Oryza sativa subsp. japonica (Rice).